A 308-amino-acid polypeptide reads, in one-letter code: Glycine betaine uptake system ATP-binding protein YehX (308 aa).

Residues 2 to 235 (IEFSHVSKLF…PANDFVRQFF (234 aa)) enclose the ABC transporter domain. 34–41 (GTSGSGKS) is an ATP binding site.

It belongs to the ABC transporter superfamily. As to quaternary structure, the complex is composed of two ATP-binding proteins (YehX), two transmembrane proteins (YehW and YehY) and a solute-binding protein (YehZ).

The enzyme catalyses glycine betaine(out) + ATP + H2O = glycine betaine(in) + ADP + phosphate + H(+). Part of an ABC transporter complex involved in low-affinity glycine betaine uptake. Probably responsible for energy coupling to the transport system. The protein is Glycine betaine uptake system ATP-binding protein YehX (yehX) of Escherichia coli (strain K12).